A 195-amino-acid polypeptide reads, in one-letter code: ATP-dependent Clp protease proteolytic subunit 3 (195 aa).

The active-site Nucleophile is Ser97. The active site involves His122.

Belongs to the peptidase S14 family. As to quaternary structure, fourteen ClpP subunits assemble into 2 heptameric rings which stack back to back to give a disk-like structure with a central cavity, resembling the structure of eukaryotic proteasomes.

It is found in the cytoplasm. The enzyme catalyses Hydrolysis of proteins to small peptides in the presence of ATP and magnesium. alpha-casein is the usual test substrate. In the absence of ATP, only oligopeptides shorter than five residues are hydrolyzed (such as succinyl-Leu-Tyr-|-NHMec, and Leu-Tyr-Leu-|-Tyr-Trp, in which cleavage of the -Tyr-|-Leu- and -Tyr-|-Trp bonds also occurs).. Functionally, cleaves peptides in various proteins in a process that requires ATP hydrolysis. Has a chymotrypsin-like activity. Plays a major role in the degradation of misfolded proteins. This is ATP-dependent Clp protease proteolytic subunit 3 from Rhizobium meliloti (strain 1021) (Ensifer meliloti).